We begin with the raw amino-acid sequence, 731 residues long: Polyribonucleotide nucleotidyltransferase (731 aa).

Residues aspartate 488 and aspartate 494 each coordinate Mg(2+). The KH domain occupies 555–614; the sequence is PRIEVINIAVDKIRDVIGSGGKVIREIVEQTGAKINIEDDGTIKIASADAKTIEAAKRWI. One can recognise an S1 motif domain in the interval 624–692; that stretch reads GAIYQGTVVK…ERGKVRLSMK (69 aa). A disordered region spans residues 693-731; the sequence is AVDQKTGKEMTDDKSVKEEKCMDEKKQPENKRRRKKKEE. Over residues 694 to 722 the composition is skewed to basic and acidic residues; the sequence is VDQKTGKEMTDDKSVKEEKCMDEKKQPEN.

This sequence belongs to the polyribonucleotide nucleotidyltransferase family. Mg(2+) serves as cofactor.

It is found in the cytoplasm. The catalysed reaction is RNA(n+1) + phosphate = RNA(n) + a ribonucleoside 5'-diphosphate. Functionally, involved in mRNA degradation. Catalyzes the phosphorolysis of single-stranded polyribonucleotides processively in the 3'- to 5'-direction. The polypeptide is Polyribonucleotide nucleotidyltransferase (Bartonella tribocorum (strain CIP 105476 / IBS 506)).